Reading from the N-terminus, the 264-residue chain is Acyl-[acyl-carrier-protein]--UDP-N-acetylglucosamine O-acyltransferase (264 aa).

Belongs to the transferase hexapeptide repeat family. LpxA subfamily. In terms of assembly, homotrimer.

It localises to the cytoplasm. The enzyme catalyses a (3R)-hydroxyacyl-[ACP] + UDP-N-acetyl-alpha-D-glucosamine = a UDP-3-O-[(3R)-3-hydroxyacyl]-N-acetyl-alpha-D-glucosamine + holo-[ACP]. The protein operates within glycolipid biosynthesis; lipid IV(A) biosynthesis; lipid IV(A) from (3R)-3-hydroxytetradecanoyl-[acyl-carrier-protein] and UDP-N-acetyl-alpha-D-glucosamine: step 1/6. Its function is as follows. Involved in the biosynthesis of lipid A, a phosphorylated glycolipid that anchors the lipopolysaccharide to the outer membrane of the cell. The protein is Acyl-[acyl-carrier-protein]--UDP-N-acetylglucosamine O-acyltransferase of Rickettsia africae (strain ESF-5).